Here is a 907-residue protein sequence, read N- to C-terminus: Putative pentatricopeptide repeat-containing protein At5g59900 (907 aa).

PPR repeat units follow at residues S103–P137, S155–K185, E191–P225, D226–V260, N261–P295, D296–P330, S331–P365, N366–P400, N401–L435, S436–P470, T471–P505, S506–P540, N541–P575, D576–L610, N611–L645, D646–P680, D681–P715, N716–P750, N751–G782, N786–P820, D821–P855, and D856–P890. Positions G887–S907 are disordered. The span at N891–S907 shows a compositional bias: low complexity.

This sequence belongs to the PPR family. P subfamily.

In Arabidopsis thaliana (Mouse-ear cress), this protein is Putative pentatricopeptide repeat-containing protein At5g59900.